The primary structure comprises 591 residues: Dihydroxyacetone kinase 2 (591 aa).

In terms of domain architecture, DhaK spans Ser8–Trp344. The interval Ala40–Ser59 is disordered. Residues Gly58 to His61, Lys109, and Asp114 contribute to the substrate site. Catalysis depends on His223, which acts as the Tele-hemiaminal-histidine intermediate. The region spanning Asp384–Thr587 is the DhaL domain. ATP-binding positions include Asp413 to Cys416, Thr459 to Ser460, Thr511 to Leu512, and Asp572 to Gly574.

It belongs to the dihydroxyacetone kinase (DAK) family.

The enzyme catalyses dihydroxyacetone + ATP = dihydroxyacetone phosphate + ADP + H(+). The catalysed reaction is D-glyceraldehyde + ATP = D-glyceraldehyde 3-phosphate + ADP + H(+). The protein operates within polyol metabolism; glycerol fermentation; glycerone phosphate from glycerol (oxidative route): step 2/2. Functionally, catalyzes both the phosphorylation of dihydroxyacetone and of glyceraldehyde. This chain is Dihydroxyacetone kinase 2 (DAK2), found in Saccharomyces cerevisiae (strain ATCC 204508 / S288c) (Baker's yeast).